Here is a 31-residue protein sequence, read N- to C-terminus: U2-theraphotoxin-Hhn1a (31 aa).

3 disulfide bridges follow: cysteine 2–cysteine 14, cysteine 7–cysteine 19, and cysteine 13–cysteine 26.

As to expression, expressed by the venom gland.

It localises to the secreted. In terms of biological role, agglutinates erythrocytes. The sequence is that of U2-theraphotoxin-Hhn1a from Cyriopagopus hainanus (Chinese bird spider).